The primary structure comprises 356 residues: Geranylgeranyl pyrophosphate synthase penG (356 aa).

Isopentenyl diphosphate is bound by residues Lys-83, Arg-86, and His-115. Mg(2+) is bound by residues Asp-122 and Asp-126. Arg-131 contributes to the dimethylallyl diphosphate binding site. Arg-132 contacts isopentenyl diphosphate. Positions 209, 210, and 243 each coordinate dimethylallyl diphosphate. Asp-246 is a Mg(2+) binding site. Dimethylallyl diphosphate is bound by residues Asn-250, Lys-260, and Lys-270.

This sequence belongs to the FPP/GGPP synthase family. The cofactor is Mg(2+).

The catalysed reaction is isopentenyl diphosphate + dimethylallyl diphosphate = (2E)-geranyl diphosphate + diphosphate. It carries out the reaction isopentenyl diphosphate + (2E)-geranyl diphosphate = (2E,6E)-farnesyl diphosphate + diphosphate. The enzyme catalyses isopentenyl diphosphate + (2E,6E)-farnesyl diphosphate = (2E,6E,10E)-geranylgeranyl diphosphate + diphosphate. The protein operates within secondary metabolite biosynthesis. In terms of biological role, geranylgeranyl pyrophosphate synthase; part of the gene cluster that mediates the biosynthesis of the indole diterpenes penitrems. The geranylgeranyl diphosphate (GGPP) synthase ptmG catalyzes the first step in penitrem biosynthesis via conversion of farnesyl pyrophosphate and isopentyl pyrophosphate into geranylgeranyl pyrophosphate (GGPP). Condensation of indole-3-glycerol phosphate with GGPP by the prenyl transferase ptmC then forms 3-geranylgeranylindole (3-GGI). Epoxidation by the FAD-dependent monooxygenase ptmM leads to a epoxidized-GGI that is substrate of the terpene cyclase ptmB for cyclization to yield paspaline. Paspaline is subsequently converted to 13-desoxypaxilline by the cytochrome P450 monooxygenase ptmP, the latter being then converted to paxilline by the cytochrome P450 monooxygenase ptmQ. Paxilline is converted to beta-paxitriol via C-10 ketoreduction by the short-chain dehydrogenase ptmH which can be monoprenylated at the C-20 by the indole diterpene prenyltransferase ptmD. A two-step elimination (acetylation and elimination) process performed by the O-acetyltransferase ptmV and ptmI leads to the production of the prenylated form of penijanthine. The FAD-linked oxidoreductase ptmO then converts the prenylated form of penijanthine into PC-M5 which is in turn transformed into PC-M4 by the aromatic dimethylallyltransferase ptmE. Five sequential oxidative transformations performed by the cytochrome P450 monooxygenases ptmK, ptmU, ptmL, ptmN and ptmJ yield the various penitrem compounds. PtmK, ptmU and ptmM are involved in the formation of the key bicyclic ring of penitrem C via the formation of the intermediates secopenitrem D and penitrem D. PtmL catalyzes the epoxidation of penitrem D and C to yield penitrem B and F, respectively. PtmJ catalyzes the last benzylic hydroxylation to convert penitrem B to prenitrem E and penitrem F to penitrem A. This chain is Geranylgeranyl pyrophosphate synthase penG, found in Penicillium ochrochloron.